Reading from the N-terminus, the 357-residue chain is Geranylgeranyl pyrophosphate synthase, chloroplastic (357 aa).

A chloroplast-targeting transit peptide spans 1–40; it reads MRSNLCHPLKNQLPISFFLSGTIRKPIFSCSRLSISAIIT. Residues Lys106, Arg109, and His138 each contribute to the isopentenyl diphosphate site. Residues Asp145 and Asp151 each contribute to the Mg(2+) site. Arg156 serves as a coordination point for dimethylallyl diphosphate. Arg157 is an isopentenyl diphosphate binding site. Residues Lys242, Thr243, Gln280, Lys297, and Lys307 each coordinate dimethylallyl diphosphate.

It belongs to the FPP/GGPP synthase family. The cofactor is Mg(2+).

The protein resides in the plastid. Its subcellular location is the chloroplast. It carries out the reaction isopentenyl diphosphate + dimethylallyl diphosphate = (2E)-geranyl diphosphate + diphosphate. It catalyses the reaction isopentenyl diphosphate + (2E)-geranyl diphosphate = (2E,6E)-farnesyl diphosphate + diphosphate. The enzyme catalyses isopentenyl diphosphate + (2E,6E)-farnesyl diphosphate = (2E,6E,10E)-geranylgeranyl diphosphate + diphosphate. The protein operates within isoprenoid biosynthesis; farnesyl diphosphate biosynthesis; farnesyl diphosphate from geranyl diphosphate and isopentenyl diphosphate: step 1/1. It participates in isoprenoid biosynthesis; geranyl diphosphate biosynthesis; geranyl diphosphate from dimethylallyl diphosphate and isopentenyl diphosphate: step 1/1. It functions in the pathway isoprenoid biosynthesis; geranylgeranyl diphosphate biosynthesis; geranylgeranyl diphosphate from farnesyl diphosphate and isopentenyl diphosphate: step 1/1. Its function is as follows. Catalyzes the trans-addition of the three molecules of IPP onto DMAPP to form geranylgeranyl pyrophosphate. This is Geranylgeranyl pyrophosphate synthase, chloroplastic (GGPS1) from Catharanthus roseus (Madagascar periwinkle).